Consider the following 506-residue polypeptide: NAD(P)H-quinone oxidoreductase subunit 2 (506 aa).

Transmembrane regions (helical) follow at residues 14–34, 42–62, 79–99, 108–128, 132–152, 167–187, 206–226, 240–260, 276–296, 302–322, 330–350, 374–394, and 409–429; these read AIIP…VDLA, WAPI…ALQW, LAIS…LISW, PIGE…LLCG, LISV…LSGY, LLVG…LYGL, FITS…IAAV, PTPV…AFAI, LLFT…ALAQ, MLAY…VSGT, VLYL…VILF, LGLS…GFFG, and LLVI…ISVI.

Belongs to the complex I subunit 2 family. NDH-1 can be composed of about 15 different subunits; different subcomplexes with different compositions have been identified which probably have different functions.

It is found in the cellular thylakoid membrane. It catalyses the reaction a plastoquinone + NADH + (n+1) H(+)(in) = a plastoquinol + NAD(+) + n H(+)(out). The catalysed reaction is a plastoquinone + NADPH + (n+1) H(+)(in) = a plastoquinol + NADP(+) + n H(+)(out). NDH-1 shuttles electrons from an unknown electron donor, via FMN and iron-sulfur (Fe-S) centers, to quinones in the respiratory and/or the photosynthetic chain. The immediate electron acceptor for the enzyme in this species is believed to be plastoquinone. Couples the redox reaction to proton translocation, and thus conserves the redox energy in a proton gradient. Cyanobacterial NDH-1 also plays a role in inorganic carbon-concentration. In Prochlorococcus marinus (strain MIT 9215), this protein is NAD(P)H-quinone oxidoreductase subunit 2.